A 268-amino-acid chain; its full sequence is Indole-3-glycerol phosphate synthase (268 aa).

The protein belongs to the TrpC family.

It carries out the reaction 1-(2-carboxyphenylamino)-1-deoxy-D-ribulose 5-phosphate + H(+) = (1S,2R)-1-C-(indol-3-yl)glycerol 3-phosphate + CO2 + H2O. Its pathway is amino-acid biosynthesis; L-tryptophan biosynthesis; L-tryptophan from chorismate: step 4/5. The polypeptide is Indole-3-glycerol phosphate synthase (Micrococcus luteus (strain ATCC 4698 / DSM 20030 / JCM 1464 / CCM 169 / CCUG 5858 / IAM 1056 / NBRC 3333 / NCIMB 9278 / NCTC 2665 / VKM Ac-2230) (Micrococcus lysodeikticus)).